A 189-amino-acid chain; its full sequence is HGPRTase-like protein (189 aa).

This sequence belongs to the purine/pyrimidine phosphoribosyltransferase family. Archaeal HPRT subfamily.

May catalyze a purine salvage reaction, the substrate is unknown. This chain is HGPRTase-like protein, found in Natronomonas pharaonis (strain ATCC 35678 / DSM 2160 / CIP 103997 / JCM 8858 / NBRC 14720 / NCIMB 2260 / Gabara) (Halobacterium pharaonis).